We begin with the raw amino-acid sequence, 281 residues long: UPF0294 protein VC_2238 (281 aa).

It belongs to the UPF0294 family.

The protein localises to the cytoplasm. This chain is UPF0294 protein VC_2238, found in Vibrio cholerae serotype O1 (strain ATCC 39315 / El Tor Inaba N16961).